Consider the following 790-residue polypeptide: Cadherin-6 (790 aa).

A signal peptide spans 1-18 (MRTYRYFLLLFWVGQPYP). Positions 19–53 (TLSTPLSKRTSGFPAKKRALELSGNSKNELNRSKR) are excised as a propeptide. N-linked (GlcNAc...) asparagine glycosylation occurs at asparagine 49. Cadherin domains lie at 54–159 (SWMW…EPIF), 160–268 (TKEV…PPRF), 269–383 (PQST…PPVF), 384–486 (SKLA…DNAP), and 487–608 (EFAE…LIHP). At 54–615 (SWMWNQFFLL…IHPTGLSTGA (562 aa)) the chain is on the extracellular side. Residue asparagine 255 is glycosylated (N-linked (GlcNAc...) asparagine). The tract at residues 259–288 (TDVNDNPPRFPQSTYQFKTPESSPPGTPIG) is disordered. Polar residues predominate over residues 269 to 279 (PQSTYQFKTPE). Residues asparagine 399, asparagine 437, asparagine 455, and asparagine 536 are each glycosylated (N-linked (GlcNAc...) asparagine). The chain crosses the membrane as a helical span at residues 616-636 (LVAILLCIVILLVTVVLFAAL). Topologically, residues 637 to 790 (RRQRKKEPLI…YGGVDSDKDS (154 aa)) are cytoplasmic. 2 positions are modified to phosphoserine: serine 786 and serine 790.

In terms of tissue distribution, highly expressed in brain, cerebellum, and kidney. Lung, pancreas, and gastric mucosa show a weak expression. Also expressed in certain liver and kidney carcinomas.

The protein resides in the cell membrane. Functionally, cadherins are calcium-dependent cell adhesion proteins. They preferentially interact with themselves in a homophilic manner in connecting cells; cadherins may thus contribute to the sorting of heterogeneous cell types. The polypeptide is Cadherin-6 (CDH6) (Homo sapiens (Human)).